The sequence spans 89 residues: UPF0297 protein lp_2275 (89 aa).

This sequence belongs to the UPF0297 family.

The protein is UPF0297 protein lp_2275 of Lactiplantibacillus plantarum (strain ATCC BAA-793 / NCIMB 8826 / WCFS1) (Lactobacillus plantarum).